The primary structure comprises 313 residues: Aspartate carbamoyltransferase catalytic subunit (313 aa).

2 residues coordinate carbamoyl phosphate: R58 and T59. K86 contributes to the L-aspartate binding site. Positions 108, 136, and 139 each coordinate carbamoyl phosphate. The L-aspartate site is built by R169 and R223. Residues G264 and P265 each contribute to the carbamoyl phosphate site.

Belongs to the aspartate/ornithine carbamoyltransferase superfamily. ATCase family. As to quaternary structure, heterododecamer (2C3:3R2) of six catalytic PyrB chains organized as two trimers (C3), and six regulatory PyrI chains organized as three dimers (R2).

It carries out the reaction carbamoyl phosphate + L-aspartate = N-carbamoyl-L-aspartate + phosphate + H(+). It participates in pyrimidine metabolism; UMP biosynthesis via de novo pathway; (S)-dihydroorotate from bicarbonate: step 2/3. Its function is as follows. Catalyzes the condensation of carbamoyl phosphate and aspartate to form carbamoyl aspartate and inorganic phosphate, the committed step in the de novo pyrimidine nucleotide biosynthesis pathway. This chain is Aspartate carbamoyltransferase catalytic subunit, found in Halothermothrix orenii (strain H 168 / OCM 544 / DSM 9562).